The sequence spans 497 residues: MGLFGLLKYAYSNRLVKHDAITTPPGIMTPIAIDLWNVMYTLMEKFDQERNFPLDGAAVTARCFFSLLRLLLKRSYYPIFVSDRGIYGDGRVKQGAKAIVSQTMSSYGGSGRLSSACFTGDEHDTEFQEDPEENDVSVPPQDTCPPTEISAGYVEPERKCEHSSTRWSALDGAPRLSYRLCVNLIRHLGYPYVNACNLEADDVCANLYHTNTVAQIYTTDTDLILMGCDIILDIMPLFPPTLRCCDVLMDLGVTYDEFLTEFVRCHTDLHEPQTLASVQSVISSLHSPPDEDEGADMPQTPSGHSWRCPNERRVISWRRQDDHDYDSSTEDSDQSDSSEEEEECPAGKGFGYRENPAVETCKRRTRPRRSAEASGRILHLKYTSRYPPIMESAPRALVRMAPPKTRHEVLERKFVKHVVSMLTPERRGSLSIMRRLPITQEPSNFSLVHDTLKNLVSEHEIARELANMFWNHIPTPTDYNTVLVNYWDDCGHRRQWS.

Disordered stretches follow at residues 122–142 and 280–373; these read EHDT…PPQD and SVIS…SAEA. Over residues 309–326 the composition is skewed to basic and acidic residues; the sequence is PNERRVISWRRQDDHDYD. The span at 327 to 344 shows a compositional bias: acidic residues; sequence SSTEDSDQSDSSEEEEEC.

The protein belongs to the herpesviridae VHS protein family.

The protein localises to the virion. In terms of biological role, minor structural protein that acts as an endoribonuclease during lytic infection. Degrades host mRNAs in the cytoplasm by cutting them at preferred sites, including some in regions of translation initiation. This is Virion host shutoff protein from Equine herpesvirus 1 (strain Ab4p) (EHV-1).